A 706-amino-acid polypeptide reads, in one-letter code: Ribosomal RNA large subunit methyltransferase K/L (706 aa).

In terms of domain architecture, THUMP spans 43–154 (LMYQSLLWSR…RDMASVALDL (112 aa)).

Belongs to the methyltransferase superfamily. RlmKL family.

The protein localises to the cytoplasm. It carries out the reaction guanosine(2445) in 23S rRNA + S-adenosyl-L-methionine = N(2)-methylguanosine(2445) in 23S rRNA + S-adenosyl-L-homocysteine + H(+). The catalysed reaction is guanosine(2069) in 23S rRNA + S-adenosyl-L-methionine = N(2)-methylguanosine(2069) in 23S rRNA + S-adenosyl-L-homocysteine + H(+). Functionally, specifically methylates the guanine in position 2445 (m2G2445) and the guanine in position 2069 (m7G2069) of 23S rRNA. This is Ribosomal RNA large subunit methyltransferase K/L from Yersinia enterocolitica serotype O:8 / biotype 1B (strain NCTC 13174 / 8081).